We begin with the raw amino-acid sequence, 246 residues long: Glutamate/aspartate import permease protein GltJ (246 aa).

In terms of domain architecture, ABC transmembrane type-1 spans 29-230; the sequence is FQVTIALSIC…LINAFIMLVM (202 aa). 5 helical membrane-spanning segments follow: residues 33-53, 74-94, 104-124, 179-196, and 212-232; these read IALS…FGIL, NVPL…LLPE, LDPN…FTAA, LVKN…DMAA, and FTAI…VMTL.

This sequence belongs to the binding-protein-dependent transport system permease family. HisMQ subfamily. In terms of assembly, the complex is composed of two ATP-binding proteins (GltL), two transmembrane proteins (GltJ and GltK) and a solute-binding protein (GltI).

The protein localises to the cell inner membrane. Part of the ABC transporter complex GltIJKL involved in glutamate and aspartate uptake. Probably responsible for the translocation of the substrate across the membrane. This chain is Glutamate/aspartate import permease protein GltJ (gltJ), found in Escherichia coli O6:H1 (strain CFT073 / ATCC 700928 / UPEC).